The sequence spans 92 residues: Small ribosomal subunit protein uS19c (92 aa).

Belongs to the universal ribosomal protein uS19 family.

The protein resides in the plastid. Its subcellular location is the chloroplast. Functionally, protein S19 forms a complex with S13 that binds strongly to the 16S ribosomal RNA. In Ceratophyllum demersum (Rigid hornwort), this protein is Small ribosomal subunit protein uS19c.